A 762-amino-acid polypeptide reads, in one-letter code: Endonuclease MutS2 (762 aa).

A disordered region spans residues 1–22 (MSDAPKRSLNPTLMMNNNNTPP). Residues 9 to 20 (LNPTLMMNNNNT) show a composition bias toward low complexity. 333–340 (GVNAGGKT) serves as a coordination point for ATP. The Smr domain occupies 688–762 (LDLRGQRSEE…GGSGVKIVKL (75 aa)).

The protein belongs to the DNA mismatch repair MutS family. MutS2 subfamily. In terms of assembly, homodimer. Binds to stalled ribosomes, contacting rRNA.

With respect to regulation, ATPase activity is stimulated by DNA. Functionally, endonuclease that is involved in the suppression of homologous recombination and may thus have a key role in the control of bacterial genetic diversity. Also involved in repairing oxidative DNA damage. Has ATPase activity. Binds DNA. In terms of biological role, endonuclease that is involved in the suppression of homologous recombination and thus may have a key role in the control of bacterial genetic diversity. Its function is as follows. Acts as a ribosome collision sensor, splitting the ribosome into its 2 subunits. Detects stalled/collided 70S ribosomes which it binds and splits by an ATP-hydrolysis driven conformational change. Acts upstream of the ribosome quality control system (RQC), a ribosome-associated complex that mediates the extraction of incompletely synthesized nascent chains from stalled ribosomes and their subsequent degradation. Probably generates substrates for RQC. In Helicobacter pylori (strain ATCC 700392 / 26695) (Campylobacter pylori), this protein is Endonuclease MutS2.